Here is a 155-residue protein sequence, read N- to C-terminus: Aspartate 1-decarboxylase (155 aa).

S24 serves as the catalytic Schiff-base intermediate with substrate; via pyruvic acid. S24 carries the pyruvic acid (Ser) modification. Residue T56 coordinates substrate. Y57 functions as the Proton donor in the catalytic mechanism. Residue 72 to 74 (GAA) coordinates substrate.

The protein belongs to the PanD family. As to quaternary structure, heterooctamer of four alpha and four beta subunits. Pyruvate is required as a cofactor. Post-translationally, is synthesized initially as an inactive proenzyme, which is activated by self-cleavage at a specific serine bond to produce a beta-subunit with a hydroxyl group at its C-terminus and an alpha-subunit with a pyruvoyl group at its N-terminus.

It is found in the cytoplasm. The enzyme catalyses L-aspartate + H(+) = beta-alanine + CO2. The protein operates within cofactor biosynthesis; (R)-pantothenate biosynthesis; beta-alanine from L-aspartate: step 1/1. Functionally, catalyzes the pyruvoyl-dependent decarboxylation of aspartate to produce beta-alanine. The protein is Aspartate 1-decarboxylase of Agrobacterium fabrum (strain C58 / ATCC 33970) (Agrobacterium tumefaciens (strain C58)).